Reading from the N-terminus, the 364-residue chain is Appendage-associated protein (364 aa).

Coiled coils occupy residues 142-196 (IIHE…AECR) and 288-313 (RIAQ…ALGK).

Its subcellular location is the secreted. Its function is as follows. Associates with actin filament appendages that are formed in the inclusion appendages of the parasitophorous vacuole during infection of the host erythrocyte. The chain is Appendage-associated protein from Anaplasma marginale (strain Illinois).